A 318-amino-acid polypeptide reads, in one-letter code: Protoheme IX farnesyltransferase (318 aa).

Helical transmembrane passes span 27 to 47 (IMMLVVFTAVAGLAAASGMTG), 52 to 72 (PAMAAIAVLAVALGSGAAGAI), 103 to 123 (LTMGLIMSGVSVMLMWLASNW), 124 to 144 (LAAALLAFSIFYYGVIYTMWL), 152 to 172 (IVIGGGAGAFPPVIGWAAVTG), 179 to 199 (WILFAIIFFWTPPHFWALSLL), 225 to 245 (ILVYTLVLIPVSLAPLATGLG), 248 to 268 (IYGAVAGGLGLVFLAYAVAIL), and 288 to 308 (AFLFSILYLFALFGAVLVEHA).

It belongs to the UbiA prenyltransferase family. Protoheme IX farnesyltransferase subfamily. Interacts with CtaA.

The protein localises to the cell inner membrane. The enzyme catalyses heme b + (2E,6E)-farnesyl diphosphate + H2O = Fe(II)-heme o + diphosphate. It functions in the pathway porphyrin-containing compound metabolism; heme O biosynthesis; heme O from protoheme: step 1/1. Its function is as follows. Converts heme B (protoheme IX) to heme O by substitution of the vinyl group on carbon 2 of heme B porphyrin ring with a hydroxyethyl farnesyl side group. In Hyphomonas neptunium (strain ATCC 15444), this protein is Protoheme IX farnesyltransferase.